The chain runs to 317 residues: Melanocyte-stimulating hormone receptor (317 aa).

Topologically, residues 1-37 are extracellular; the sequence is MRVQGSQRRLLGSLNSTPTATPHLGLAANQTGARCLE. A glycan (N-linked (GlcNAc...) asparagine) is linked at Asn-29. A helical membrane pass occupies residues 38–63; it reads VSIPDGLFLSLGLVSLVENVLVVTAI. Residues 64-72 are Cytoplasmic-facing; that stretch reads AKNRNLHSP. A helical transmembrane segment spans residues 73-93; sequence MYCFICCLALSDLLVSGSNML. At 94-118 the chain is on the extracellular side; sequence ETAVTLLLEAGALAARAAVVQQLDN. Residues 119–140 form a helical membrane-spanning segment; the sequence is VIDVITCSSMLSSLCFLGAIAV. The Cytoplasmic portion of the chain corresponds to 141–163; that stretch reads DRYISIFYALRYHSIVTLPRARR. The chain crosses the membrane as a helical span at residues 164-183; sequence AIAAIWVASVLCSTLFIAYY. The Extracellular portion of the chain corresponds to 184-191; that stretch reads DHAAVLLC. Residues 192 to 211 form a helical membrane-spanning segment; that stretch reads LVVFFLAMLVLMAVLYVHML. At 212-240 the chain is on the cytoplasmic side; that stretch reads ARACQHAQGIARLHKRQRLAHQGFGLKGA. A helical membrane pass occupies residues 241–266; it reads ATLTILLGIFFLCWGPFFLHLTLIVL. The Extracellular portion of the chain corresponds to 267–279; sequence CPQHPTCSCIFKN. Residues 280–300 form a helical membrane-spanning segment; it reads FNLFLALIICNAIIDPLIYAF. At 301–317 the chain is on the cytoplasmic side; the sequence is RSQELRRTLKEVLLCSW. Residue Cys-315 is the site of S-palmitoyl cysteine attachment.

The protein belongs to the G-protein coupled receptor 1 family. In terms of assembly, interacts with MGRN1, but does not undergo MGRN1-mediated ubiquitination; this interaction competes with GNAS-binding and thus inhibits agonist-induced cAMP production. Interacts with OPN3; the interaction results in a decrease in MC1R-mediated cAMP signaling and ultimately a decrease in melanin production in melanocytes.

It is found in the cell membrane. Functionally, receptor for MSH (alpha, beta and gamma) and ACTH. The activity of this receptor is mediated by G proteins which activate adenylate cyclase. Mediates melanogenesis, the production of eumelanin (black/brown) and phaeomelanin (red/yellow), via regulation of cAMP signaling in melanocytes. This chain is Melanocyte-stimulating hormone receptor (MC1R), found in Macaca nigra (Celebes black macaque).